The chain runs to 265 residues: Pre-protein VI (265 aa).

Residues 1–33 (MEDINFSSLAPRHGTRPYMGTWNEIGTSQLNGG) constitute a propeptide that is removed on maturation. Positions 34–54 (AFNWNSIWSGLKNFGSTIKTY) are amphipathic alpha-helix essential for membrane lytic activity. Positions 36–53 (NWNSIWSGLKNFGSTIKT) are involved in endosomal membrane lysis. Residues 48-74 (GSTIKTYGTKAWNSQTGQMLRDKLKDQ) are interaction with hexon protein. Positions 67–76 (LRDKLKDQNF) match the Nuclear export signal motif. A disordered region spans residues 123–155 (LETVPGSVPTKGEKRPRPDAEETLVTHTTEPPS). The segment covering 133-142 (KGEKRPRPDA) has biased composition (basic and acidic residues). The short motif at 136–140 (KRPRP) is the Nuclear localization signal element. At T148 the chain carries Phosphothreonine; by host. Residues 153–156 (PPSY) carry the PPXY motif motif. The short motif at 246–257 (STLNSIVGLGVK) is the Nuclear export signal element. The interaction with hexon protein stretch occupies residues 248 to 254 (LNSIVGL). Residues 255–265 (GVKSLKRRRCY) are binds to importin alpha/beta, involved in hexon nuclear import. The Nuclear localization signal signature appears at 260–263 (KRRR).

The protein belongs to the adenoviridae protein VI family. Interacts with hexon protein; this interaction allows nuclear import of hexon trimers and possibly pre-capsid assembly. Interacts (via C-terminal NLS) with importin alpha/beta. In terms of assembly, interacts (via PPxY motif) with host NEDD4 ubiquitine ligase; this interaction might play a role in virus intracellular transport during entry. Part of a complex composed of the core-capsid bridging protein, the endosome lysis protein VI and the hexon-linking protein VIII; these interactions bridge the virus core to the capsid. Interacts with peripentonal hexons; this interaction stabilizes the capsid by gluing two peripentonal hexons together and joining them with an adjacent group-of-nine hexon. As to quaternary structure, heterodimer with the viral protease; disulfide-linked. Interacts with the viral protease. Post-translationally, ubiquitinated by Nedd4 following partial capsid disassembly; which might play a role in intracellular virus movement during entry. In terms of processing, contains the major nuclear import and export signals. Proteolytically removed during virion maturation. The processing of the C-terminus turns the precursor into a mature viral structural protein and abrogates its ability to promote hexon import and act as a potential chaperone protein.

Its subcellular location is the host nucleus. The protein resides in the host cytoplasm. The protein localises to the virion. Functionally, during virus assembly, promotes hexon trimers nuclear import through nuclear pore complexes via an importin alpha/beta-dependent mechanism. By analogy to herpesviruses capsid assembly, might act as a chaperone to promote the formation of the icosahedral capsid. In terms of biological role, structural component of the virion that provides increased stability to the particle shell through its interaction with the core-capsid bridging protein and the hexon-linking protein VIII. Fibers shedding during virus entry into host cell allows the endosome lysis protein to be exposed as a membrane-lytic peptide. Exhibits pH-independent membrane fragmentation activity and probably mediates viral rapid escape from host endosome via organellar membrane lysis. It is not clear if it then remains partially associated with the capsid and involved in the intracellular microtubule-dependent transport of capsid to the nucleus, or if it is lost during endosomal penetration. Its function is as follows. Cofactor that activates the viral protease. Binds to viral protease in a 1:1 ratio. The chain is Pre-protein VI from Human adenovirus A serotype 12 (HAdV-12).